The chain runs to 129 residues: Beta-galactoside-binding lectin (129 aa).

Serine 1 is modified (N-acetylserine). One can recognise a Galectin domain in the interval 4–129 (GVVDERMSFK…EARIYSIEIK (126 aa)). Residue 69–75 (WGTEQRE) coordinates a beta-D-galactoside.

Its function is as follows. This protein binds beta-galactoside. Its physiological function is not yet known. This Electrophorus electricus (Electric eel) protein is Beta-galactoside-binding lectin.